We begin with the raw amino-acid sequence, 281 residues long: NADPH-dependent 7-cyano-7-deazaguanine reductase (281 aa).

Residue 87 to 89 (VES) coordinates substrate. An NADPH-binding site is contributed by 89 to 90 (SK). Catalysis depends on Cys-188, which acts as the Thioimide intermediate. Asp-195 acts as the Proton donor in catalysis. 227 to 228 (HE) provides a ligand contact to substrate. 256 to 257 (RG) contributes to the NADPH binding site.

Belongs to the GTP cyclohydrolase I family. QueF type 2 subfamily. As to quaternary structure, homodimer.

Its subcellular location is the cytoplasm. It carries out the reaction 7-aminomethyl-7-carbaguanine + 2 NADP(+) = 7-cyano-7-deazaguanine + 2 NADPH + 3 H(+). It functions in the pathway tRNA modification; tRNA-queuosine biosynthesis. Functionally, catalyzes the NADPH-dependent reduction of 7-cyano-7-deazaguanine (preQ0) to 7-aminomethyl-7-deazaguanine (preQ1). The polypeptide is NADPH-dependent 7-cyano-7-deazaguanine reductase (Aliivibrio fischeri (strain ATCC 700601 / ES114) (Vibrio fischeri)).